A 147-amino-acid polypeptide reads, in one-letter code: UPF0460 protein in nifX-nifW intergenic region (147 aa).

This sequence belongs to the UPF0460 family.

The chain is UPF0460 protein in nifX-nifW intergenic region from Frankia alni.